Consider the following 706-residue polypeptide: Polyribonucleotide nucleotidyltransferase (706 aa).

Asp487 and Asp493 together coordinate Mg(2+). The 60-residue stretch at 553 to 612 (PRLFTMKISQDKIRDVIGKGGETIRSITAETGTEINIAEDGTITIAATTQEAGDAAKKRI) folds into the KH domain. The S1 motif domain occupies 622 to 692 (GKVYEGTVVK…DRGRVRLSIK (71 aa)).

Belongs to the polyribonucleotide nucleotidyltransferase family. Requires Mg(2+) as cofactor.

It is found in the cytoplasm. It carries out the reaction RNA(n+1) + phosphate = RNA(n) + a ribonucleoside 5'-diphosphate. In terms of biological role, involved in mRNA degradation. Catalyzes the phosphorolysis of single-stranded polyribonucleotides processively in the 3'- to 5'-direction. This is Polyribonucleotide nucleotidyltransferase from Neisseria gonorrhoeae (strain ATCC 700825 / FA 1090).